Reading from the N-terminus, the 103-residue chain is Putative inactive recombination-promoting nuclease-like protein YjiP (103 aa).

Belongs to the Rpn/YhgA-like nuclease family.

This pseudogene is the N-terminal fragment of low activity DNA endonuclease RpnD which probably yields 3'-hydroxyl ends. The intact protein can be seen in this entry (AC B7NGZ6). Expression of the repaired protein increases the frequency of recA-independent recombination, but also decreases viability probably via DNA damage; in a RecA strain expression has no effect on viability but does induce the SOS repair response. May play a role in horizontal gene transfer. This chain is Putative inactive recombination-promoting nuclease-like protein YjiP (yjiP), found in Escherichia coli (strain K12).